We begin with the raw amino-acid sequence, 335 residues long: Phospho-N-acetylmuramoyl-pentapeptide-transferase (335 aa).

A run of 9 helical transmembrane segments spans residues 2–22, 55–75, 77–97, 118–137, 153–173, 193–213, 238–258, 263–283, and 313–333; these read PPLF…LILV, IPTA…LLLL, CNLW…ALGW, FFIQ…IAYG, LPHC…AIVG, VIAC…WAFI, IFMG…CAVL, FMLL…ILQV, and VVRN…FAVF.

Belongs to the glycosyltransferase 4 family. MraY subfamily. The cofactor is Mg(2+).

It localises to the cell inner membrane. It carries out the reaction UDP-N-acetyl-alpha-D-muramoyl-L-alanyl-gamma-D-glutamyl-meso-2,6-diaminopimeloyl-D-alanyl-D-alanine + di-trans,octa-cis-undecaprenyl phosphate = di-trans,octa-cis-undecaprenyl diphospho-N-acetyl-alpha-D-muramoyl-L-alanyl-D-glutamyl-meso-2,6-diaminopimeloyl-D-alanyl-D-alanine + UMP. Its pathway is cell wall biogenesis; peptidoglycan biosynthesis. Catalyzes the initial step of the lipid cycle reactions in the biosynthesis of the cell wall peptidoglycan: transfers peptidoglycan precursor phospho-MurNAc-pentapeptide from UDP-MurNAc-pentapeptide onto the lipid carrier undecaprenyl phosphate, yielding undecaprenyl-pyrophosphoryl-MurNAc-pentapeptide, known as lipid I. The sequence is that of Phospho-N-acetylmuramoyl-pentapeptide-transferase from Chlamydia muridarum (strain MoPn / Nigg).